The following is a 381-amino-acid chain: Probable envelope ADP,ATP carrier protein, chloroplastic (381 aa).

The N-terminal 26 residues, 1–26, are a transit peptide targeting the chloroplast; sequence MEEDRAILTFHRIPSLNSSLITTSSP. 5 consecutive transmembrane segments (helical) span residues 78-98, 154-179, 191-211, 237-257, and 281-301; these read LAIL…ALAG, LPQV…NLFK, LAAG…LDVL, IASF…YIAV, and LLTA…LDTV. Solcar repeat units follow at residues 85 to 177, 185 to 268, and 279 to 359; these read PKDA…YKNL, LSVI…VKKS, and SSLL…VKRL. Arg-159 provides a ligand contact to ADP. Residue Arg-302 coordinates ADP. Residues 334–360 form a helical membrane-spanning segment; the sequence is GFLPNALKTLPNSSIRLTTFDMVKRLI.

The protein belongs to the mitochondrial carrier (TC 2.A.29) family.

The protein localises to the plastid. The protein resides in the chloroplast membrane. Transports adenine nucleotides. This Arabidopsis thaliana (Mouse-ear cress) protein is Probable envelope ADP,ATP carrier protein, chloroplastic (EAAC).